Reading from the N-terminus, the 163-residue chain is Nucleotide-binding protein BC_1159 (163 aa).

The protein belongs to the YajQ family.

Functionally, nucleotide-binding protein. In Bacillus cereus (strain ATCC 14579 / DSM 31 / CCUG 7414 / JCM 2152 / NBRC 15305 / NCIMB 9373 / NCTC 2599 / NRRL B-3711), this protein is Nucleotide-binding protein BC_1159.